Consider the following 263-residue polypeptide: Protein M1627_2099 (263 aa).

It belongs to the CinA family.

In Saccharolobus islandicus (strain M.16.27) (Sulfolobus islandicus), this protein is Protein M1627_2099.